We begin with the raw amino-acid sequence, 319 residues long: Homoserine kinase (319 aa).

An ATP-binding site is contributed by 100 to 110 (PLSSGMGSSAS).

This sequence belongs to the GHMP kinase family. Homoserine kinase subfamily.

Its subcellular location is the cytoplasm. It catalyses the reaction L-homoserine + ATP = O-phospho-L-homoserine + ADP + H(+). Its pathway is amino-acid biosynthesis; L-threonine biosynthesis; L-threonine from L-aspartate: step 4/5. In terms of biological role, catalyzes the ATP-dependent phosphorylation of L-homoserine to L-homoserine phosphate. This is Homoserine kinase from Chloroherpeton thalassium (strain ATCC 35110 / GB-78).